The following is a 251-amino-acid chain: Ubiquinone/menaquinone biosynthesis C-methyltransferase UbiE (251 aa).

S-adenosyl-L-methionine contacts are provided by residues Thr74, Asp95, 123-124 (NA), and Ser140.

It belongs to the class I-like SAM-binding methyltransferase superfamily. MenG/UbiE family.

The enzyme catalyses a 2-demethylmenaquinol + S-adenosyl-L-methionine = a menaquinol + S-adenosyl-L-homocysteine + H(+). It catalyses the reaction a 2-methoxy-6-(all-trans-polyprenyl)benzene-1,4-diol + S-adenosyl-L-methionine = a 5-methoxy-2-methyl-3-(all-trans-polyprenyl)benzene-1,4-diol + S-adenosyl-L-homocysteine + H(+). It functions in the pathway quinol/quinone metabolism; menaquinone biosynthesis; menaquinol from 1,4-dihydroxy-2-naphthoate: step 2/2. It participates in cofactor biosynthesis; ubiquinone biosynthesis. In terms of biological role, methyltransferase required for the conversion of demethylmenaquinol (DMKH2) to menaquinol (MKH2) and the conversion of 2-polyprenyl-6-methoxy-1,4-benzoquinol (DDMQH2) to 2-polyprenyl-3-methyl-6-methoxy-1,4-benzoquinol (DMQH2). This Cronobacter sakazakii (strain ATCC BAA-894) (Enterobacter sakazakii) protein is Ubiquinone/menaquinone biosynthesis C-methyltransferase UbiE.